Consider the following 748-residue polypeptide: E3 ubiquitin-protein ligase SMURF2 (748 aa).

One can recognise a C2 domain in the interval 1–119 (MSNPGGRRNG…TGYQRLDLCK (119 aa)). Residue Lys119 forms a Glycyl lysine isopeptide (Lys-Gly) (interchain with G-Cter in ubiquitin) linkage. WW domains are found at residues 157–190 (NDLPDGWEERRTASGRIQYLNHITRTTQWERPTR), 251–284 (PDLPEGYEQRTTQQGQVYFLHTQTGVSTWHDPRV), and 297–330 (GPLPPGWEIRNTATGRVYFVDHNNRTTQFTDPRL). One can recognise an HECT domain in the interval 414–748 (RPKDLWKRLM…IEETCGFAVE (335 aa)). Cys716 functions as the Glycyl thioester intermediate in the catalytic mechanism.

As to quaternary structure, interacts (via WW domains) with SMAD1. Interacts (via WW domains) with SMAD2 (via PY-motif). Interacts (via WW domains) with SMAD3 (via PY-motif). Interacts with SMAD6. Interacts with SMAD7 (via PY-motif) and TGFBR1; SMAD7 recruits SMURF2 to the TGF-beta receptor and regulates its degradation. Does not interact with SMAD4; SMAD4 lacks a PY-motif. Interacts with AIMP1. Interacts with SNON. Interacts with STAMBP and RNF11. May interact with NDFIP1 and NDFIP2; this interaction induces the E3 ubiquitin-protein ligase activity. Interacts with TTC3. In terms of assembly, (Microbial infection) Interacts (via WW domains) with EBOV and MARV VP40 (via PPXY motif); the interaction facilitates VP40 virus-like particle budding. Post-translationally, auto-ubiquitinated and ubiquitinated in the presence of RNF11 and UBE2D1. Ubiquitinated by the SCF(FBXL15) complex and TTC3, leading to its degradation by the proteasome. 'Lys-48'-linked polyubiquitination mediated by TRAF4 at Lys-119 leads to SMURF2 proteasomal degradation. As to expression, widely expressed.

The protein localises to the nucleus. The protein resides in the cytoplasm. It is found in the cell membrane. It localises to the membrane raft. The enzyme catalyses S-ubiquitinyl-[E2 ubiquitin-conjugating enzyme]-L-cysteine + [acceptor protein]-L-lysine = [E2 ubiquitin-conjugating enzyme]-L-cysteine + N(6)-ubiquitinyl-[acceptor protein]-L-lysine.. The protein operates within protein modification; protein ubiquitination. Activated by NDFIP1- and NDFIP2-binding. In terms of biological role, E3 ubiquitin-protein ligase which accepts ubiquitin from an E2 ubiquitin-conjugating enzyme in the form of a thioester and then directly transfers the ubiquitin to targeted substrates. Interacts with SMAD7 to trigger SMAD7-mediated transforming growth factor beta/TGF-beta receptor ubiquitin-dependent degradation, thereby down-regulating TGF-beta signaling. In addition, interaction with SMAD7 activates autocatalytic degradation, which is prevented by interaction with AIMP1. Also forms a stable complex with TGF-beta receptor-mediated phosphorylated SMAD1, SMAD2 and SMAD3, and targets SMAD1 and SMAD2 for ubiquitination and proteasome-mediated degradation. SMAD2 may recruit substrates, such as SNON, for ubiquitin-dependent degradation. Negatively regulates TGFB1-induced epithelial-mesenchymal transition and myofibroblast differentiation. (Microbial infection) In case of filoviruses Ebola/EBOV and Marburg/MARV infection, the complex formed by viral matrix protein VP40 and SMURF2 facilitates virus budding. The polypeptide is E3 ubiquitin-protein ligase SMURF2 (Homo sapiens (Human)).